The chain runs to 512 residues: D-alanine--D-alanyl carrier protein ligase (512 aa).

152–153 (TS) serves as a coordination point for ATP. A D-alanine-binding site is contributed by aspartate 199. 294–299 (NAYGPT) lines the ATP pocket. Valine 303 contributes to the D-alanine binding site. Residues aspartate 385, 397–400 (YGGR), and lysine 499 each bind ATP. Lysine 499 serves as a coordination point for D-alanine.

It belongs to the ATP-dependent AMP-binding enzyme family. DltA subfamily.

It localises to the cytoplasm. It carries out the reaction holo-[D-alanyl-carrier protein] + D-alanine + ATP = D-alanyl-[D-alanyl-carrier protein] + AMP + diphosphate. It participates in cell wall biogenesis; lipoteichoic acid biosynthesis. Functionally, catalyzes the first step in the D-alanylation of lipoteichoic acid (LTA), the activation of D-alanine and its transfer onto the D-alanyl carrier protein (Dcp) DltC. In an ATP-dependent two-step reaction, forms a high energy D-alanyl-AMP intermediate, followed by transfer of the D-alanyl residue as a thiol ester to the phosphopantheinyl prosthetic group of the Dcp. D-alanylation of LTA plays an important role in modulating the properties of the cell wall in Gram-positive bacteria, influencing the net charge of the cell wall. This chain is D-alanine--D-alanyl carrier protein ligase, found in Streptococcus pyogenes serotype M28 (strain MGAS6180).